A 388-amino-acid chain; its full sequence is Probable protein phosphatase 2C 43 (388 aa).

The PPM-type phosphatase domain occupies 53–352 (EFSFAVVQAN…DDITVVVVFI (300 aa)). Aspartate 84, glycine 85, aspartate 284, and aspartate 343 together coordinate Mn(2+).

The protein belongs to the PP2C family. The cofactor is Mg(2+). Requires Mn(2+) as cofactor.

It catalyses the reaction O-phospho-L-seryl-[protein] + H2O = L-seryl-[protein] + phosphate. It carries out the reaction O-phospho-L-threonyl-[protein] + H2O = L-threonyl-[protein] + phosphate. This is Probable protein phosphatase 2C 43 from Oryza sativa subsp. japonica (Rice).